The sequence spans 393 residues: Putative zinc metalloprotease Rip3 (393 aa).

Helical transmembrane passes span 10–30 (IAGF…LFTW) and 45–65 (AVVY…SLLA). Position 66 (His66) interacts with Zn(2+). Glu67 is an active-site residue. His70 contributes to the Zn(2+) binding site. 4 consecutive transmembrane segments (helical) span residues 77-97 (AGVS…ALGG), 108-128 (IAFA…ALAI), 136-156 (PAIV…LGLF), and 207-227 (FVAG…FIFA). 2 CBS domains span residues 251–308 (MTAQ…RRST) and 315–376 (ALPL…AQPE).

The protein belongs to the peptidase M50B family. The cofactor is Zn(2+).

The protein localises to the cell membrane. This Mycobacterium tuberculosis (strain ATCC 35801 / TMC 107 / Erdman) protein is Putative zinc metalloprotease Rip3 (rip3).